Reading from the N-terminus, the 700-residue chain is Protein UL29/28 (700 aa).

The interval 1-30 is disordered; sequence MSGRRKGCSAATASSSSSSPPSRLPLPGHA. The segment covering 9 to 21 has biased composition (low complexity); the sequence is SAATASSSSSSPP.

Belongs to the herpesviridae US22 family. In terms of assembly, interacts with UL38 and host HDAC1; these interactions are necessary for the HDAC1 interaction with UL38. Interacts with host MTA2.

The protein resides in the virion. The protein localises to the host nucleus. It is found in the host cytoplasm. Functionally, contributes to activation of immediate-early gene expression. This chain is Protein UL29/28 (UL29), found in Human cytomegalovirus (strain Merlin) (HHV-5).